We begin with the raw amino-acid sequence, 178 residues long: Mediator of RNA polymerase II transcription subunit 30 (178 aa).

The segment at 1 to 22 is disordered; that stretch reads MSTPPLAPTGMASGPFGGPQAQ. N-acetylserine is present on S2. Residues 134–173 are a coiled coil; the sequence is FASEERREIVEVNKKLKQKNQQLKQIMDQLRNLIWDINAM.

Belongs to the Mediator complex subunit 30 family. In terms of assembly, component of the Mediator complex, which is composed of MED1, MED4, MED6, MED7, MED8, MED9, MED10, MED11, MED12, MED13, MED13L, MED14, MED15, MED16, MED17, MED18, MED19, MED20, MED21, MED22, MED23, MED24, MED25, MED26, MED27, MED29, MED30, MED31, CCNC, CDK8 and CDC2L6/CDK11. The MED12, MED13, CCNC and CDK8 subunits form a distinct module termed the CDK8 module. Mediator containing the CDK8 module is less active than Mediator lacking this module in supporting transcriptional activation. Individual preparations of the Mediator complex lacking one or more distinct subunits have been variously termed ARC, CRSP, DRIP, PC2, SMCC and TRAP.

It localises to the nucleus. Component of the Mediator complex, a coactivator involved in the regulated transcription of nearly all RNA polymerase II-dependent genes. Mediator functions as a bridge to convey information from gene-specific regulatory proteins to the basal RNA polymerase II transcription machinery. Mediator is recruited to promoters by direct interactions with regulatory proteins and serves as a scaffold for the assembly of a functional preinitiation complex with RNA polymerase II and the general transcription factors. In Mus musculus (Mouse), this protein is Mediator of RNA polymerase II transcription subunit 30 (Med30).